The sequence spans 158 residues: Protein FAM177B (158 aa).

The segment covering 36–48 has biased composition (acidic residues); it reads EYSTEEEEEEEKE. The tract at residues 36–59 is disordered; it reads EYSTEEEEEEEKEEQSTNSTLDPS.

This sequence belongs to the FAM177 family.

This is Protein FAM177B (FAM177B) from Homo sapiens (Human).